We begin with the raw amino-acid sequence, 1111 residues long: Serine/threonine-protein kinase Nek10 (1111 aa).

A compositionally biased stretch (basic and acidic residues) spans 1–16 (MPDQDTKAKSTEKTAD). Disordered stretches follow at residues 1-24 (MPDQ…TTTR) and 47-72 (AINF…HRAR). A compositionally biased stretch (polar residues) spans 47-63 (AINFDSAQNNMTKSEPT). The stretch at 481 to 514 (YKDLVSQLNLLLEDELKQIAENIESINQKKAPLK) forms a coiled coil. A Protein kinase domain is found at 519–791 (YAVLDHLGSG…MISDVMMKYL (273 aa)). ATP is bound by residues 525-533 (LGSGAFGCV) and Lys-548. Asp-655 (proton acceptor) is an active-site residue.

Belongs to the protein kinase superfamily. NEK Ser/Thr protein kinase family. NIMA subfamily. In terms of assembly, interacts with RAF1 and MAP2K1; the interaction is direct with RAF1 and required for ERK1/2-signaling pathway activation in response to UV irradiation. Mg(2+) serves as cofactor. Expressed in the mammary gland, lung, spleen, and kidney.

It catalyses the reaction L-seryl-[protein] + ATP = O-phospho-L-seryl-[protein] + ADP + H(+). The enzyme catalyses L-threonyl-[protein] + ATP = O-phospho-L-threonyl-[protein] + ADP + H(+). Its function is as follows. Plays a role in the cellular response to UV irradiation. Mediates G2/M cell cycle arrest, MEK autoactivation and ERK1/2-signaling pathway activation in response to UV irradiation. In ciliated cells, it is involved in the regulation of mucociliary transport. This chain is Serine/threonine-protein kinase Nek10, found in Mus musculus (Mouse).